We begin with the raw amino-acid sequence, 452 residues long: Glycoprotein endo-alpha-1,2-mannosidase-like protein (452 aa).

Residues 1-8 (MARRRRRA) lie on the Cytoplasmic side of the membrane. A helical; Signal-anchor for type II membrane protein transmembrane segment spans residues 9-29 (CIALFLVLLFAFGTLMGLRTL). Residues 30–452 (KAPDGLPALG…FIKEKEQWLM (423 aa)) lie on the Lumenal side of the membrane. Residues 40-90 (PGPELAPFERRPEGNPAPARAPAAPAAPPPPPPRTAAPRASLGPAEADPAP) form a disordered region. The span at 64 to 74 (PAAPPPPPPRT) shows a compositional bias: pro residues.

This sequence belongs to the glycosyl hydrolase 99 family.

Its subcellular location is the golgi apparatus membrane. The chain is Glycoprotein endo-alpha-1,2-mannosidase-like protein (Maneal) from Mus musculus (Mouse).